The sequence spans 295 residues: Putative aquaporin-12B (295 aa).

At 1 to 22 (MAGLNVSLSFFFATFTLCEAAR) the chain is on the cytoplasmic side. Residues 23 to 41 (RASKALLPVGAYEVFAREA) form a helical membrane-spanning segment. Residues 42 to 55 (MRTLVELGPWAGDF) lie on the Extracellular side of the membrane. The helical transmembrane segment at 56 to 74 (GPDLLLTLLFLLFLAHGVT) threads the bilayer. Residues 75 to 76 (LD) lie on the Cytoplasmic side of the membrane. The discontinuously helical intramembrane region spans 77-114 (GASANPTVSLQEFLMAEESLPGTLLKLAAQGLGMQAAC). Positions 81-83 (NPT) match the NPA 1 motif. Residues 115–120 (TLTRLC) lie on the Cytoplasmic side of the membrane. The helical transmembrane segment at 121–142 (WAWELSDLHLLQSLMAQSCSSA) threads the bilayer. The Extracellular portion of the chain corresponds to 143–145 (LRT). The chain crosses the membrane as a helical span at residues 146-166 (SVPHGALVEAACAFCFHLTLL). At 167 to 174 (HLRHSPPA) the chain is on the cytoplasmic side. The helical transmembrane segment at 175-191 (YSGPAVALLVTVTAYTA) threads the bilayer. Over 192–194 (GPF) the chain is Extracellular. Residues 195 to 206 (TSAFFNPALAAS) constitute an intramembrane region (discontinuously helical). An NPA 2 motif is present at residues 200–202 (NPA). Over 207 to 223 (VTFACSGHTLLEYVQVY) the chain is Extracellular. Residues 224 to 244 (WLGPLTGMVLAVLLHQGRLPH) form a helical membrane-spanning segment. At 245–295 (LFQRNLFYGQKNKYRAPRGKPAPASGDTQTPAKGSSVREPGRSGVEGPHSS) the chain is on the cytoplasmic side. Positions 257–295 (KYRAPRGKPAPASGDTQTPAKGSSVREPGRSGVEGPHSS) are disordered.

This sequence belongs to the MIP/aquaporin (TC 1.A.8) family. AQP11/AQP12 subfamily. In terms of assembly, homotetramer; each monomer provides an independent water pore.

The protein resides in the membrane. The enzyme catalyses H2O(in) = H2O(out). Functionally, putative aquaporin. Could form homotetrameric transmembrane channels, with each monomer independently mediating water transport across the plasma membrane along its osmotic gradient. This Homo sapiens (Human) protein is Putative aquaporin-12B.